The chain runs to 226 residues: Lipoprotein-releasing system ATP-binding protein LolD 1 (226 aa).

The ABC transporter domain maps to 6–226; that stretch reads LRLDKVTRSF…TLREGKVVAA (221 aa). 42–49 provides a ligand contact to ATP; the sequence is GPSGAGKS.

Belongs to the ABC transporter superfamily. Lipoprotein translocase (TC 3.A.1.125) family. In terms of assembly, the complex is composed of two ATP-binding proteins (LolD) and two transmembrane proteins (LolC and LolE).

The protein resides in the cell inner membrane. Functionally, part of the ABC transporter complex LolCDE involved in the translocation of mature outer membrane-directed lipoproteins, from the inner membrane to the periplasmic chaperone, LolA. Responsible for the formation of the LolA-lipoprotein complex in an ATP-dependent manner. This chain is Lipoprotein-releasing system ATP-binding protein LolD 1, found in Rhodospirillum rubrum (strain ATCC 11170 / ATH 1.1.1 / DSM 467 / LMG 4362 / NCIMB 8255 / S1).